Reading from the N-terminus, the 875-residue chain is Leucine--tRNA ligase (875 aa).

Over residues Met1–Thr20 the composition is skewed to polar residues. A disordered region spans residues Met1 to Arg22. The short motif at Pro60–His70 is the 'HIGH' region element. The short motif at Lys634–Ser638 is the 'KMSKS' region element. Lys637 provides a ligand contact to ATP.

This sequence belongs to the class-I aminoacyl-tRNA synthetase family.

The protein resides in the cytoplasm. The enzyme catalyses tRNA(Leu) + L-leucine + ATP = L-leucyl-tRNA(Leu) + AMP + diphosphate. The protein is Leucine--tRNA ligase of Synechococcus sp. (strain CC9605).